A 999-amino-acid chain; its full sequence is Probable tape measure protein (999 aa).

This sequence belongs to the skunalikevirus tape measure protein family.

It localises to the virion. Probable tape measure protein. Serves as a base for tail tube protein polymerization and acts as a template for tail length determination. This chain is Probable tape measure protein, found in Lactococcus lactis (Lactococcus lactis bacteriophage SK1).